A 179-amino-acid polypeptide reads, in one-letter code: Natural killer cells antigen CD94 (179 aa).

At 1-10 (MAVFKTTLWR) the chain is on the cytoplasmic side. A helical; Signal-anchor for type II membrane protein transmembrane segment spans residues 11 to 31 (LISGTLGIICLSLMSTLGILL). Residues 32–179 (KNSFTKLSIE…NRYICKQQLI (148 aa)) are Extracellular-facing. Cystine bridges form between C58/C70 and C61/C72. The 108-residue stretch at 68 to 175 (YRCNCYFISS…CEDKNRYICK (108 aa)) folds into the C-type lectin domain. N-linked (GlcNAc...) asparagine glycans are attached at residues N83 and N132. Cystine bridges form between C89/C174 and C152/C166.

In terms of assembly, can form disulfide-bonded heterodimer with NKG2 family members KLRC1 and KLRC2. KLRD1-KLRC1 heterodimer interacts with peptide-bound HLA-E-B2M heterotrimeric complex. KLRD1 plays a prominent role in directly interacting with HLA-E. KLRD1-KLRC1 interacts with much higher affinity with peptide-bound HLA-E-B2M than KLRD1-KLRC2. Interacts with the adapter protein TYROBP/DAP12; this interaction is required for cell surface expression and cell activation. As to expression, expressed in NK cell subsets (at protein level). Expressed in memory/effector CD8-positive alpha-beta T cell subsets (at protein level). Expressed in melanoma-specific cytotoxic T cell clones (at protein level). Expressed in terminally differentiated cytotoxic gamma-delta T cells (at protein level). KLRD1-KLRC1 and KLRD1-KLRC2 are differentially expressed in NK and T cell populations, with only minor subsets expressing both receptor complexes (at protein level).

It localises to the cell membrane. Immune receptor involved in self-nonself discrimination. In complex with KLRC1 or KLRC2 on cytotoxic and regulatory lymphocyte subsets, recognizes non-classical major histocompatibility (MHC) class Ib molecule HLA-E loaded with self-peptides derived from the signal sequence of classical MHC class Ia and non-classical MHC class Ib molecules. Enables cytotoxic cells to monitor the expression of MHC class I molecules in healthy cells and to tolerate self. Primarily functions as a ligand binding subunit as it lacks the capacity to signal. Functionally, KLRD1-KLRC1 acts as an immune inhibitory receptor. Key inhibitory receptor on natural killer (NK) cells that regulates their activation and effector functions. Dominantly counteracts T cell receptor signaling on a subset of memory/effector CD8-positive T cells as part of an antigen-driven response to avoid autoimmunity. On intraepithelial CD8-positive gamma-delta regulatory T cells triggers TGFB1 secretion, which in turn limits the cytotoxic programming of intraepithelial CD8-positive alpha-beta T cells, distinguishing harmless from pathogenic antigens. In HLA-E-rich tumor microenvironment, acts as an immune inhibitory checkpoint and may contribute to progressive loss of effector functions of NK cells and tumor-specific T cells, a state known as cell exhaustion. Upon HLA-E-peptide binding, transmits intracellular signals through KLRC1 immunoreceptor tyrosine-based inhibition motifs (ITIMs) by recruiting INPP5D/SHIP-1 and INPPL1/SHIP-2 tyrosine phosphatases to ITIMs, and ultimately opposing signals transmitted by activating receptors through dephosphorylation of proximal signaling molecules. Its function is as follows. KLRD1-KLRC2 acts as an immune activating receptor. On cytotoxic lymphocyte subsets recognizes HLA-E loaded with signal sequence-derived peptides from non-classical MHC class Ib HLA-G molecules, likely playing a role in the generation and effector functions of adaptive NK cells and in maternal-fetal tolerance during pregnancy. Regulates the effector functions of terminally differentiated cytotoxic lymphocyte subsets, and in particular may play a role in adaptive NK cell response to viral infection. Upon HLA-E-peptide binding, transmits intracellular signals via the adapter protein TYROBP/DAP12, triggering the phosphorylation of proximal signaling molecules and cell activation. In terms of biological role, (Microbial infection) Viruses like human cytomegalovirus have evolved an escape mechanism whereby virus-induced down-regulation of host MHC class I molecules is coupled to the binding of viral peptides to HLA-E, restoring HLA-E expression and inducing HLA-E-dependent NK cell immune tolerance to infected cells. Recognizes HLA-E in complex with human cytomegalovirus UL40-derived peptide (VMAPRTLIL) and inhibits NK cell cytotoxicity. (Microbial infection) May recognize HLA-E in complex with HIV-1 gag/Capsid protein p24-derived peptide (AISPRTLNA) on infected cells and may inhibit NK cell cytotoxicity, a mechanism that allows HIV-1 to escape immune recognition. Functionally, (Microbial infection) Upon SARS-CoV-2 infection, may contribute to functional exhaustion of cytotoxic NK cells and CD8-positive T cells. On NK cells, may recognize HLA-E in complex with SARS-CoV-2 S/Spike protein S1-derived peptide (LQPRTFLL) expressed on the surface of lung epithelial cells, inducing NK cell exhaustion and dampening antiviral immune surveillance. This chain is Natural killer cells antigen CD94 (KLRD1), found in Homo sapiens (Human).